Reading from the N-terminus, the 564-residue chain is Zyxin (564 aa).

Alanine 2 bears the N-acetylalanine mark. A disordered region spans residues valine 30 to lysine 141. Composition is skewed to pro residues over residues isoleucine 63–leucine 78 and phenylalanine 93–proline 109. Serine 117, serine 144, serine 170, and serine 171 each carry phosphoserine. The interval asparagine 162–threonine 344 is disordered. 2 stretches are compositionally biased toward pro residues: residues valine 174–lysine 189 and proline 197–glutamine 214. Threonine 180 carries the phosphothreonine modification. Residues glutamine 234–proline 243 show a composition bias toward polar residues. Arginine 244 carries the post-translational modification Asymmetric dimethylarginine. Positions proline 255–alanine 275 are enriched in low complexity. Residues lysine 256 and lysine 263 each carry the N6-acetyllysine modification. Threonine 265 bears the Phosphothreonine mark. At lysine 270 the chain carries N6-acetyllysine. Phosphoserine is present on residues serine 272 and serine 300. Polar residues predominate over residues serine 294 to glutamine 310. Positions glutamine 311–histidine 322 are enriched in basic and acidic residues. A Phosphoserine modification is found at serine 336. LIM zinc-binding domains are found at residues cysteine 376–lysine 435, cysteine 436–arginine 495, and cysteine 496–alanine 562.

The protein belongs to the zyxin/ajuba family. As to quaternary structure, interacts, via the Pro-rich regions, with the EVH1 domains of ENAH, EVL and VASP. Interacts with the first LIM domain of TES. Interacts with SYNPO2.

The protein resides in the cytoplasm. The protein localises to the cytoskeleton. It is found in the cell junction. It localises to the focal adhesion. Its subcellular location is the nucleus. Functionally, adhesion plaque protein. Binds alpha-actinin and the CRP protein. Important for targeting TES and ENA/VASP family members to focal adhesions and for the formation of actin-rich structures. May be a component of a signal transduction pathway that mediates adhesion-stimulated changes in gene expression. This chain is Zyxin (Zyx), found in Mus musculus (Mouse).